Reading from the N-terminus, the 809-residue chain is Leucine--tRNA ligase (809 aa).

A 'HIGH' region motif is present at residues 40-51 (PYPSGQGLHVGH). The short motif at 581-585 (KMSKS) is the 'KMSKS' region element. Position 584 (Lys584) interacts with ATP.

The protein belongs to the class-I aminoacyl-tRNA synthetase family.

The protein localises to the cytoplasm. The enzyme catalyses tRNA(Leu) + L-leucine + ATP = L-leucyl-tRNA(Leu) + AMP + diphosphate. This is Leucine--tRNA ligase from Levilactobacillus brevis (strain ATCC 367 / BCRC 12310 / CIP 105137 / JCM 1170 / LMG 11437 / NCIMB 947 / NCTC 947) (Lactobacillus brevis).